Here is a 397-residue protein sequence, read N- to C-terminus: Enoyl-[acyl-carrier-protein] reductase [NADH] (397 aa).

NAD(+) is bound by residues 48-53 (GASTGY), 74-75 (LE), 111-112 (DA), and 139-140 (LA). A substrate-binding site is contributed by Tyr225. The Proton donor role is filled by Tyr235. Residues Lys244 and 273 to 275 (VVT) contribute to the NAD(+) site.

It belongs to the TER reductase family. In terms of assembly, monomer.

The catalysed reaction is a 2,3-saturated acyl-[ACP] + NAD(+) = a (2E)-enoyl-[ACP] + NADH + H(+). It participates in lipid metabolism; fatty acid biosynthesis. Its function is as follows. Involved in the final reduction of the elongation cycle of fatty acid synthesis (FAS II). Catalyzes the reduction of a carbon-carbon double bond in an enoyl moiety that is covalently linked to an acyl carrier protein (ACP). This is Enoyl-[acyl-carrier-protein] reductase [NADH] from Tolumonas auensis (strain DSM 9187 / NBRC 110442 / TA 4).